Consider the following 31-residue polypeptide: Cyclotide vibi-G (31 aa).

The cyclopeptide (Gly-Asn) cross-link spans 1–31; sequence GTFPCGESCVFIPCLTSAIGCSCKSKVCYKN. 3 cysteine pairs are disulfide-bonded: Cys5–Cys21, Cys9–Cys23, and Cys14–Cys28.

This is a cyclic peptide.

Functionally, probably participates in a plant defense mechanism. Has cytotoxic activity, active against a human lymphoma cell line with an IC(50) of 0.96 uM. This is Cyclotide vibi-G from Viola biflora (Yellow wood violet).